Reading from the N-terminus, the 62-residue chain is Photosystem II reaction center protein Z (62 aa).

2 consecutive transmembrane segments (helical) span residues 8 to 28 (SVFALIAISTLLVIGVPVALA) and 41 to 61 (FSGVSLWIGSVFLVGILNSFI).

This sequence belongs to the PsbZ family. PSII is composed of 1 copy each of membrane proteins PsbA, PsbB, PsbC, PsbD, PsbE, PsbF, PsbH, PsbI, PsbJ, PsbK, PsbL, PsbM, PsbT, PsbY, PsbZ, Psb30/Ycf12, at least 3 peripheral proteins of the oxygen-evolving complex and a large number of cofactors. It forms dimeric complexes.

It localises to the plastid. Its subcellular location is the chloroplast thylakoid membrane. Its function is as follows. May control the interaction of photosystem II (PSII) cores with the light-harvesting antenna, regulates electron flow through the 2 photosystem reaction centers. PSII is a light-driven water plastoquinone oxidoreductase, using light energy to abstract electrons from H(2)O, generating a proton gradient subsequently used for ATP formation. This chain is Photosystem II reaction center protein Z, found in Cryptomeria japonica (Japanese cedar).